We begin with the raw amino-acid sequence, 469 residues long: Ribosomal protein uS12 methylthiotransferase RimO (469 aa).

The 111-residue stretch at 34 to 144 (NKIGFVSLGC…VLEHVHQFAP (111 aa)) folds into the MTTase N-terminal domain. Positions 43, 79, 108, 176, 180, and 183 each coordinate [4Fe-4S] cluster. The region spanning 162 to 399 (LTPKHYAYLK…MLVQQEISAA (238 aa)) is the Radical SAM core domain. Positions 402–468 (QKRIGSTMKV…EYDLWGSLVR (67 aa)) constitute a TRAM domain.

Belongs to the methylthiotransferase family. RimO subfamily. [4Fe-4S] cluster is required as a cofactor.

The protein resides in the cytoplasm. The enzyme catalyses L-aspartate(89)-[ribosomal protein uS12]-hydrogen + (sulfur carrier)-SH + AH2 + 2 S-adenosyl-L-methionine = 3-methylsulfanyl-L-aspartate(89)-[ribosomal protein uS12]-hydrogen + (sulfur carrier)-H + 5'-deoxyadenosine + L-methionine + A + S-adenosyl-L-homocysteine + 2 H(+). Its function is as follows. Catalyzes the methylthiolation of an aspartic acid residue of ribosomal protein uS12. This is Ribosomal protein uS12 methylthiotransferase RimO from Vibrio vulnificus (strain YJ016).